The chain runs to 513 residues: MATSSSAWLMFSDHYPEILIAIACFLIFSLLLSARSSSEDSLPYNWPIFGMLPAIISNNQFNDFTTARLRKMGWTFIFKGPWLLDMDYIFTCDPSNINHMFNDNFENYPKGELGKVFDIFGNNIFNADGDLWHDHRKMAQTILWDGNYRTMQATFIRNKMDNALIPILDSAACKRKPVDLQDVLLRFTFDTSCFSVLAADPESLTMEFPPVPFSKAADQALDAALTRHITPRLIWKLKRFFNVGSERTLAVAWKVIDSYIYDKIAELKAKRKLVGKINSYDAVSFYMDNFNIHDDKFLRDNAFTYLLAQRNTQSLTMTWLFYALFENPKVELKILSELKSIVDESSERKFNDGFTLFDSNMIQSAIYLHAALCEALRIYPPVPFEIKDAHKADVLPSGHKVRAGEKILFSPYAMARMKGIWGDDCLEFKPERWITGNGTLKHEPAYKFFAFSAGPRICLGKELSFTQMKMVVATIIYNFHLQMVKGHVVEQSNSILMDMKHGLMVQVRKRSVM.

A helical transmembrane segment spans residues 14 to 34; the sequence is HYPEILIAIACFLIFSLLLSA. Cys458 is a binding site for heme.

Belongs to the cytochrome P450 family. Requires heme as cofactor.

Its subcellular location is the membrane. The enzyme catalyses 4'-O-methylnorbelladine + reduced [NADPH--hemoprotein reductase] + O2 = (10bR,4aS)-noroxomaritidine + oxidized [NADPH--hemoprotein reductase] + 2 H2O + H(+). It catalyses the reaction 4'-O-methylnorbelladine + reduced [NADPH--hemoprotein reductase] + O2 = (10bS,4aR)-noroxomaritidine + oxidized [NADPH--hemoprotein reductase] + 2 H2O + H(+). It participates in alkaloid biosynthesis. In terms of biological role, cytochrome P450 that catalyzes an intramolecular para-para' C-C phenol coupling of 4'-O-methylnorbelladine in alkaloids biosynthesis, including haemanthamine- and crinamine-type alkaloids, promising anticancer agents. Catalyzes the formation of (10bR,4aS)-noroxomaritidine and (10bS,4aR)-noroxomaritidine from 4'-O-methylnorbelladine. The polypeptide is Noroxomaritidine synthase 2 (Narcissus aff. pseudonarcissus MK-2014 (Daffodil)).